Consider the following 94-residue polypeptide: Integration host factor subunit beta (94 aa).

It belongs to the bacterial histone-like protein family. Heterodimer of an alpha and a beta chain.

Its function is as follows. This protein is one of the two subunits of integration host factor, a specific DNA-binding protein that functions in genetic recombination as well as in transcriptional and translational control. The chain is Integration host factor subunit beta (ihfB) from Pasteurella multocida (strain Pm70).